Here is a 1160-residue protein sequence, read N- to C-terminus: MALWATSMRRAIPGISKAFLGSNRVLETAGVSQLSKHLLPQWSGVPHRKISASATNFNDKVKESNTPDANAYIRSGHIKAAEHEKVKKVVVVGSGGLSIGQAGEFDYSGAQAIKALRESSVHTILINPNIATIQSSHSLADEIYFLPVTAEYLTHLIERENPDGILLTFGGQTALNVGIQLDDMGVFARNHVKVLGTPISTLKTSEDRDLFAKALNEINIPIAESVAVSTVDEALQAAEKVSYPVIIRSAYSLGGLGSGFANNKEELQSMAAKSLSLTPQILVEKSLKGWKEVEYEVVRDAANNCITVCNMENFDPLGIHTGDSIVVAPSQTLSDEEYHMLRTAAIKIIRHLGVVGECNVQYALSPNSLEYRVIEVNARLSRSSALASKATGYPLAYTAAKIALGHTLPELPNAVTKTTTANFEPSLDYVVTKIPRWDLSKFQYVNREIGSSMKSVGEVMAVGRTFEESLQKALRQVDPSFLGFMAMPFKDLDNALSVPTDRRFFAVVEAMLNQGYSIDKIHDLTKIDKWFLSKLANMAKVYKELEEIGSLYGLNKEIMLRAKKTGFSDLQISKLVGASELDVRARRKRLDVHPWVKKIDTLAAEFPAHTNYLYTSYNASSHDIDFNEHGTMVLGSGVYRIGSSVEFDWCGVSCARTLRKLGHSTIMVNYNPETVSTDFDECERLYFEELSYERVMDIYEMETASGIVVSVGGQLPQNIALKLQETGAKVLGTDPLMIDSAEDRHKFSQILDKIGVDQPAWKELTSVAEASKFANAVGYPVLVRPSYVLSGAAMSVIRDESSLKDKLENASAVSPDHPVVITKFIEGARELDVDAVASKGKLLVHAVSEHVENAGVHSGDATIALPPYSLSEDILSRCKEIAEKVCKAFQITGPYNMQIILAQNPDKPDTPDLKVIECNLRASRSFPFVSKTLGVNFIDVATRSIIDQEVPAARDLMAVHRDYVCVKVPQFSWTRLAGADPYLGVEMSSTGEVACFGKDVKEAYWAALQSTQNFKIPLPGQGILLGGDRPELAGIAADLSKLGYKLYVANKDAAKLLQPTSAEVVEFPVKDKRALRAIFEKYNIRSVFNLASARGKNVLDQDYVMRRNAVDFNVTLINDVNCAKLFVESLKEKLPSVLSEKKEMPSEVKRWSEWIGSHDL.

Residues 81–478 (AEHEKVKKVV…SLQKALRQVD (398 aa)) are carboxyphosphate synthetic domain. 12 residues coordinate ATP: R208, R248, G254, G255, K285, L287, E292, G318, I319, H320, Q361, and E375. The ATP-grasp 1 domain maps to 212–404 (AKALNEINIP…LAYTAAKIAL (193 aa)). 3 residues coordinate Mg(2+): Q361, E375, and N377. Q361, E375, and N377 together coordinate Mn(2+). Residues 479 to 623 (PSFLGFMAMP…YTSYNASSHD (145 aa)) are oligomerization domain. The tract at residues 624-1012 (IDFNEHGTMV…AYWAALQSTQ (389 aa)) is carbamoyl phosphate synthetic domain. Positions 748-946 (SQILDKIGVD…FIDVATRSII (199 aa)) constitute an ATP-grasp 2 domain. Positions 784, 823, 825, 830, 855, 856, 857, 858, 898, and 917 each coordinate ATP. 3 residues coordinate Mg(2+): Q898, E917, and N919. Q898, E917, and N919 together coordinate Mn(2+). Residues 1013–1144 (NFKIPLPGQG…PSVLSEKKEM (132 aa)) are allosteric domain. The region spanning 1014–1160 (FKIPLPGQGI…WSEWIGSHDL (147 aa)) is the MGS-like domain.

The protein belongs to the CarB family. As to quaternary structure, heterodimer composed of 2 chains; the small (or glutamine) chain promotes the hydrolysis of glutamine to ammonia, which is used by the large (or ammonia) chain to synthesize carbamoyl phosphate. The cofactor is Mg(2+). It depends on Mn(2+) as a cofactor.

Its subcellular location is the mitochondrion. The catalysed reaction is hydrogencarbonate + L-glutamine + 2 ATP + H2O = carbamoyl phosphate + L-glutamate + 2 ADP + phosphate + 2 H(+). The enzyme catalyses hydrogencarbonate + NH4(+) + 2 ATP = carbamoyl phosphate + 2 ADP + phosphate + 2 H(+). Its pathway is amino-acid biosynthesis; L-arginine biosynthesis; carbamoyl phosphate from bicarbonate: step 1/1. Functionally, large subunit of the arginine-specific carbamoyl phosphate synthase (CPSase). CPSase catalyzes the formation of carbamoyl phosphate from the ammonia moiety of glutamine, hydrogencarbonate, and phosphate donated by ATP, the first step of the arginine biosynthetic pathway. The large subunit (synthetase) binds the substrates ammonia (free or transferred from glutamine from the small subunit), hydrogencarbonate and ATP and carries out an ATP-coupled ligase reaction, activating hydrogencarbonate by forming carboxy phosphate which reacts with ammonia to form carbamoyl phosphate. The polypeptide is Carbamoyl phosphate synthase arginine-specific large chain, mitochondrial (arg4) (Schizosaccharomyces pombe (strain 972 / ATCC 24843) (Fission yeast)).